The following is a 414-amino-acid chain: Esterase FrsA (414 aa).

This sequence belongs to the FrsA family.

The catalysed reaction is a carboxylic ester + H2O = an alcohol + a carboxylate + H(+). Its function is as follows. Catalyzes the hydrolysis of esters. The protein is Esterase FrsA of Salmonella choleraesuis (strain SC-B67).